The chain runs to 429 residues: Tol-Pal system protein TolB (429 aa).

Positions 1-21 are cleaved as a signal peptide; sequence MKPVFKMLLSLLILWTSLLHA.

The protein belongs to the TolB family. In terms of assembly, the Tol-Pal system is composed of five core proteins: the inner membrane proteins TolA, TolQ and TolR, the periplasmic protein TolB and the outer membrane protein Pal. They form a network linking the inner and outer membranes and the peptidoglycan layer.

Its subcellular location is the periplasm. Part of the Tol-Pal system, which plays a role in outer membrane invagination during cell division and is important for maintaining outer membrane integrity. TolB occupies a key intermediary position in the Tol-Pal system because it communicates directly with both membrane-embedded components, Pal in the outer membrane and TolA in the inner membrane. The protein is Tol-Pal system protein TolB of Hamiltonella defensa subsp. Acyrthosiphon pisum (strain 5AT).